Reading from the N-terminus, the 295-residue chain is Probable adenylate kinase 6, chloroplastic (295 aa).

Residues 1–46 constitute a chloroplast transit peptide; it reads MAVSHRLLRPATTTIKNTFSSLFIRSLSSSSSGSSLDPKIDLEEAA. 74–79 serves as a coordination point for ATP; sequence GVGKGT. Residues 94-123 form an NMP region; that stretch reads ATGDLVREELSSSGLLSSQLKELVNHGKLV. Residues Thr95, Arg100, 121-123, 151-154, and Gln158 each bind AMP; these read KLV and GFPR. The LID stretch occupies residues 187–235; that stretch reads GRRICSECGGNYNVACIDIKGDDDTPRMYMPPLLPPPNCESKLISRADD. Arg188 is an ATP binding site. Arg243 is an AMP binding site. Residue Gly271 participates in ATP binding.

It belongs to the adenylate kinase family. In terms of assembly, monomer.

Its subcellular location is the plastid. The protein localises to the chloroplast. The catalysed reaction is AMP + ATP = 2 ADP. Functionally, catalyzes the reversible transfer of the terminal phosphate group between ATP and AMP. Plays an important role in cellular energy homeostasis and in adenine nucleotide metabolism. The protein is Probable adenylate kinase 6, chloroplastic of Arabidopsis thaliana (Mouse-ear cress).